We begin with the raw amino-acid sequence, 493 residues long: Leucine-rich repeat-containing protein 14 (493 aa).

Residues 111 to 146 (KHALRVLDMTGLLDDGVEQDPGTMSMWDCTAAVART) form an LRR 1; degenerate repeat. One copy of the LRR 2; degenerate repeat lies at 194 to 218 (RLCCRDLRAEDLPMRNTVALLQLLD). The stretch at 219–246 (AGCLRRVDLRFNNLGLRGLSVIIPHVAR) is one LRR 3; degenerate repeat. The stretch at 247 to 282 (FQHLASLRLHYVHGDSRQPSVDGEDNFRYFLAQMGR) is one LRR 4; degenerate repeat. 5 LRR repeats span residues 283-307 (FTCL…LSTL), 308-339 (QSPL…AHLK), 340-360 (KLDL…QGLL), 364-391 (AATL…ILTQ), and 392-416 (CASL…LLRD).

This sequence belongs to the PRAME family. LRRC14 subfamily. Interacts with IKBKB; disrupts IKBKB-IKBKG interaction preventing I-kappa-B-kinase (IKK) core complex formation and leading to a decrease of IKBKB phosphorylation and NF-kappaB activation. Interacts with CHUK.

The protein localises to the cytoplasm. In terms of biological role, negatively regulates Toll-like receptor-mediated NF-kappa-B signaling by disrupting IKK core complex formation through interaction with IKBKB. The protein is Leucine-rich repeat-containing protein 14 of Homo sapiens (Human).